The primary structure comprises 407 residues: 45 kDa calcium-binding protein (407 aa).

The N-terminal stretch at 1–35 (MVWSWVAMASRWGPLVGLAPRCLWLLGAVLLMDAS) is a signal peptide. Residue Asn-40 is glycosylated (N-linked (GlcNAc...) asparagine). EF-hand domains follow at residues 98 to 133 (RSRRKLMVIFSKVDVNTDRKISAKEMQRWIMEKTAE) and 137 to 172 (EAMEESKTHFRAVDPDGDGHVSWDEYKVKFLASKGH). Phosphoserine is present on Ser-99. Asp-111, Asn-113, Asp-115, Lys-117, Glu-122, Asp-150, Asp-152, Asp-154, His-156, and Glu-161 together coordinate Ca(2+). Residues Thr-193 and Thr-217 each carry the phosphothreonine modification. Low complexity predominate over residues 249 to 259 (GSSLAGAPGPG). The segment at 249–282 (GSSLAGAPGPGDQRQGPGIAGKSGKVLREPQPGC) is disordered. The Ca(2+) site is built by Asp-291, Asp-293, Asp-295, Gln-297, and Glu-302. 3 consecutive EF-hand domains span residues 291 to 313 (DQDGDKQLSLPEFVSLPVGTVEN), 323 to 358 (WVKDRKKEFEELIDSNHDGIVTAEELESYMDPMNEY), and 359 to 394 (NALNEAKQMIAVADENQNHHLEPEEVLKYSEFFTGS). Phosphothreonine is present on Thr-310. Ca(2+) is bound by residues Asp-336, Asn-338, and Asp-340. Thr-344 is modified (phosphothreonine). Residues Glu-347, Asp-372, Asn-374, Asn-376, His-378, and Glu-383 each coordinate Ca(2+). A necessary for intracellular retention in Golgi apparatus lumen region spans residues 354–407 (PMNEYNALNEAKQMIAVADENQNHHLEPEEVLKYSEFFTGSKLVDYARSVHEEF).

It belongs to the CREC family.

Its subcellular location is the golgi apparatus lumen. Functionally, may regulate calcium-dependent activities in the endoplasmic reticulum lumen or post-ER compartment. This chain is 45 kDa calcium-binding protein (SDF4), found in Macaca fascicularis (Crab-eating macaque).